An 890-amino-acid polypeptide reads, in one-letter code: Putative RNA-binding protein 15B (890 aa).

The disordered stretch occupies residues 1–133 (MKRQSERDSS…AEPACPGSSA (133 aa)). The span at 10-20 (SPSGRGSSSSA) shows a compositional bias: low complexity. Composition is skewed to basic and acidic residues over residues 22–34 (RPRE…EAGG) and 66–78 (GHRD…DANH). Positions 86-99 (SGSGAGGGGRGGKA) are enriched in gly residues. A phosphoserine mark is found at Ser-109 and Ser-113. The span at 113 to 124 (SPLPPPPPPPGA) shows a compositional bias: pro residues. An RRM 1 domain is found at 139 to 219 (KTLLISSLSP…RPLKVEPVYL (81 aa)). Lys-213 is covalently cross-linked (Glycyl lysine isopeptide (Lys-Gly) (interchain with G-Cter in SUMO2)). Residues 219–253 (LRGGGGSSRRSSSSSAAASTPPPGPPAPADPLGYL) form a disordered region. Residues 226–237 (SRRSSSSSAAAS) are compositionally biased toward low complexity. A compositionally biased stretch (pro residues) spans 238–247 (TPPPGPPAPA). Phosphoserine occurs at positions 265 and 267. 2 RRM domains span residues 337–414 (RNLF…YGKA) and 418–492 (TRLW…FAKA). At Thr-532 the chain carries Phosphothreonine. The segment at 547 to 705 (EGDWTSPSKS…KPLEEPKHET (159 aa)) is disordered. Ser-552, Ser-556, and Ser-562 each carry phosphoserine. Composition is skewed to basic and acidic residues over residues 573 to 616 (RSGE…ERSR) and 626 to 646 (RGSD…EGTK). The Nuclear localization signal signature appears at 593–597 (RRKRR). Low complexity predominate over residues 647–657 (ESSSNSLSNSR). Positions 671–703 (EAADSSHGKKARDSERNHRTTEAEPKPLEEPKH) are enriched in basic and acidic residues. A Glycyl lysine isopeptide (Lys-Gly) (interchain with G-Cter in SUMO2) cross-link involves residue Lys-702. Residues 711-889 (LSEYAQTLQL…HMVIVIVRDT (179 aa)) enclose the SPOC domain. Residues 722–890 (WNGLLVLKNS…MVIVIVRDTA (169 aa)) form an interaction with Epstein-Barr virus BMLF1 region.

The protein belongs to the RRM Spen family. As to quaternary structure, component of the WMM complex, a N6-methyltransferase complex composed of a catalytic subcomplex, named MAC, and of an associated subcomplex, named MACOM. The MAC subcomplex is composed of METTL3 and METTL14. The MACOM subcomplex is composed of WTAP, ZC3H13, CBLL1/HAKAI, VIRMA, and, in some cases of RBM15 (RBM15 or RBM15B). May interact with NCOR2. Interacts with NXF1, the interaction is required to promote mRNA export. (Microbial infection) Interacts (via the SPOC domain) with Epstein-Barr virus BMLF1 (via the N-terminus); the interaction is direct. As to expression, ubiquitously expressed.

It is found in the nucleus. Its subcellular location is the nucleoplasm. The protein resides in the nucleus speckle. It localises to the nucleus envelope. Its function is as follows. RNA-binding protein that acts as a key regulator of N6-methyladenosine (m6A) methylation of RNAs, thereby regulating different processes, such as alternative splicing of mRNAs and X chromosome inactivation mediated by Xist RNA. Associated component of the WMM complex, a complex that mediates N6-methyladenosine (m6A) methylation of RNAs, a modification that plays a role in the efficiency of mRNA splicing and RNA processing. Plays a key role in m6A methylation, possibly by binding target RNAs and recruiting the WMM complex. Involved in random X inactivation mediated by Xist RNA: acts by binding Xist RNA and recruiting the WMM complex, which mediates m6A methylation, leading to target YTHDC1 reader on Xist RNA and promoting transcription repression activity of Xist. Functions in the regulation of alternative or illicit splicing, possibly by regulating m6A methylation. Inhibits pre-mRNA splicing. Also functions as a mRNA export factor by acting as a cofactor for the nuclear export receptor NXF1. This Homo sapiens (Human) protein is Putative RNA-binding protein 15B.